A 257-amino-acid chain; its full sequence is MAKSWGETTGGSNDKIEFLKFNNGITRVRIVSGVLPRYVYWLTNKEGSVAPFECLRFNRDKESFVRGKADPVHELGFFEKELDKDGNRVPLKPKKNYIAFVIDRSDNKLKVMEVKATILKGIQSIMKQLNLATPFDIDISIEKKGKGFDTEYDVQQIAAMQFQIKLQDPNSAESKQYAADVDLIGEAMCDEDGDIIKFEKVPSLEQTYPVPTYEEQKEAIQAFMEGRENKDDDAKSGNSNAGSQKGIDQEAASDLDD.

The segment at alanine 222 to aspartate 257 is disordered. Basic and acidic residues predominate over residues glutamate 225–lysine 235.

Its function is as follows. Required during DNA replication. Displaced viral DNA strands are transiently coated with the ssDNA-binding protein. It is then probably removed by the replisome that performs lagging strand synthesis or during the events that lead up to the recombination process. This is Probable ssDNA-binding protein (D11) from Escherichia phage T5 (Enterobacteria phage T5).